Here is a 382-residue protein sequence, read N- to C-terminus: Lipid-A-disaccharide synthase (382 aa).

The protein belongs to the LpxB family.

The catalysed reaction is 2-N,3-O-bis[(3R)-3-hydroxytetradecanoyl]-alpha-D-glucosaminyl 1-phosphate + UDP-2-N,3-O-bis[(3R)-3-hydroxytetradecanoyl]-alpha-D-glucosamine = lipid A disaccharide (E. coli) + UDP + H(+). It catalyses the reaction a lipid X + a UDP-2-N,3-O-bis[(3R)-3-hydroxyacyl]-alpha-D-glucosamine = a lipid A disaccharide + UDP + H(+). Its pathway is glycolipid biosynthesis; lipid IV(A) biosynthesis; lipid IV(A) from (3R)-3-hydroxytetradecanoyl-[acyl-carrier-protein] and UDP-N-acetyl-alpha-D-glucosamine: step 5/6. In terms of biological role, condensation of UDP-2,3-diacylglucosamine and 2,3-diacylglucosamine-1-phosphate to form lipid A disaccharide, a precursor of lipid A, a phosphorylated glycolipid that anchors the lipopolysaccharide to the outer membrane of the cell. The polypeptide is Lipid-A-disaccharide synthase (Escherichia coli (strain 55989 / EAEC)).